A 182-amino-acid chain; its full sequence is UPF0397 protein VS_II0189 (182 aa).

A run of 5 helical transmembrane segments spans residues Val-8–Val-28, Ala-41–Ile-61, Trp-72–Phe-92, Phe-110–Phe-130, and Gln-146–Leu-166.

It belongs to the UPF0397 family.

The protein resides in the cell membrane. This is UPF0397 protein VS_II0189 from Vibrio atlanticus (strain LGP32) (Vibrio splendidus (strain Mel32)).